Consider the following 172-residue polypeptide: Small ribosomal subunit protein uS5 (172 aa).

Positions 17 to 80 (LREKMIAVNR…DEARRKMVKV (64 aa)) constitute an S5 DRBM domain.

Belongs to the universal ribosomal protein uS5 family. In terms of assembly, part of the 30S ribosomal subunit. Contacts proteins S4 and S8.

Functionally, with S4 and S12 plays an important role in translational accuracy. Located at the back of the 30S subunit body where it stabilizes the conformation of the head with respect to the body. The sequence is that of Small ribosomal subunit protein uS5 from Ralstonia nicotianae (strain ATCC BAA-1114 / GMI1000) (Ralstonia solanacearum).